The primary structure comprises 246 residues: Adenosine 5'-phosphosulfate reductase (246 aa).

[4Fe-4S] cluster-binding residues include Cys131, Cys132, Cys214, and Cys217. The active-site Nucleophile; cysteine thiosulfonate intermediate is the Cys242.

The protein belongs to the PAPS reductase family. CysH subfamily. The cofactor is [4Fe-4S] cluster.

It localises to the cytoplasm. It carries out the reaction [thioredoxin]-disulfide + sulfite + AMP + 2 H(+) = adenosine 5'-phosphosulfate + [thioredoxin]-dithiol. Its pathway is sulfur metabolism; hydrogen sulfide biosynthesis; sulfite from sulfate. In terms of biological role, catalyzes the formation of sulfite from adenosine 5'-phosphosulfate (APS) using thioredoxin as an electron donor. The protein is Adenosine 5'-phosphosulfate reductase of Neisseria meningitidis serogroup B (strain ATCC BAA-335 / MC58).